The sequence spans 349 residues: Ferredoxin--NADP reductase 1 (349 aa).

FAD is bound by residues Glu-36, Lys-44, Tyr-48, Ile-88, Leu-123, Asp-290, and Ser-331.

This sequence belongs to the ferredoxin--NADP reductase type 2 family. In terms of assembly, homodimer. FAD is required as a cofactor.

The catalysed reaction is 2 reduced [2Fe-2S]-[ferredoxin] + NADP(+) + H(+) = 2 oxidized [2Fe-2S]-[ferredoxin] + NADPH. The protein is Ferredoxin--NADP reductase 1 of Bacillus mycoides (strain KBAB4) (Bacillus weihenstephanensis).